The chain runs to 321 residues: uncharacterized protein (321 aa).

Position 2 is an N-acetylvaline (valine 2). The interval 37-63 (SEASRLLTPQTSSNHALSKMQKDDDIR) is disordered. The segment covering 43-52 (LTPQTSSNHA) has biased composition (polar residues). Threonine 44 is modified (phosphothreonine). Serine 49, serine 69, serine 121, serine 126, serine 129, serine 137, and serine 139 each carry phosphoserine. Disordered stretches follow at residues 115–270 (KKQR…YSIS) and 283–321 (ETLE…AQPQ). Composition is skewed to polar residues over residues 120–145 (KSIN…TSTD), 153–162 (KYSSSGTPEN), and 178–189 (SYGQMIKNNSNR). Position 159 is a phosphothreonine (threonine 159). Residues 204–229 (EIDHTAPEKSEKRQERSGRSFDRQKS) are compositionally biased toward basic and acidic residues. Polar residues predominate over residues 237–253 (LSRSISRGPTKNKTVSP). A phosphoserine mark is found at serine 238, serine 240, serine 242, and serine 270. Acidic residues predominate over residues 284–305 (TLEEEQEDAEKEGVLMEDEGNE). Basic and acidic residues predominate over residues 306–315 (EYTKDLEEAA).

Its subcellular location is the cytoplasm. This is an uncharacterized protein from Saccharomyces cerevisiae (strain ATCC 204508 / S288c) (Baker's yeast).